An 867-amino-acid polypeptide reads, in one-letter code: DNA endonuclease RBBP8 (867 aa).

An essential for binding to the MRN complex and for RPA focus formation on DNA damage region spans residues 25 to 48; that stretch reads ELWSKLKECHDKELQELLLKINKL. 2 coiled-coil regions span residues 38–87 and 120–141; these read LQEL…EDRL and ITEL…SEQL. 2 disordered regions span residues 141–171 and 448–486; these read LHNM…PDSP and RYGK…HSML. Positions 154–166 are enriched in acidic residues; it reads ENPADTGEGEDGV. The PXDLS motif signature appears at 489–493; that stretch reads PLDLS. The segment at 508 to 531 is damage-recruitment motif; sequence SSRGRTKQTFALVPEKPDPKKPLH. Residues Thr-817 and Thr-829 each carry the phosphothreonine modification. Residues 843–867 form a disordered region; the sequence is SPCQRPRRRQPYNAKFSSKIKEQKT.

The protein belongs to the COM1/SAE2/CtIP family. As to quaternary structure, homotetramer; formed by antiparallel association of helical extensions protruding from the N-termini of two parallel coiled-coil dimers. Interacts with the MRN complex; the interaction links DNA sensing to resection. Interacts with samhd1. In terms of processing, phosphorylation at Thr-817 and Thr-829 promote interaction with nbn and recruitment to double-strand breaks (DSBs).

The protein localises to the nucleus. The protein resides in the chromosome. Endonuclease that cooperates with the MRE11-RAD50-NBN (MRN) complex in DNA-end resection, the first step of double-strand break (DSB) repair through the homologous recombination (HR) pathway. Functions downstream of the MRN complex and ATM, promotes ATR activation and its recruitment to DSBs in the S/G2 phase facilitating the generation of ssDNA. Specifically promotes the endonuclease activity of the MRN complex to clear DNA ends containing protein adducts: recruited to DSBs by nbn following phosphorylation, and promotes the endonuclease of mre11 to clear protein-DNA adducts and generate clean double-strand break ends. This Xenopus tropicalis (Western clawed frog) protein is DNA endonuclease RBBP8 (rbbp8).